A 320-amino-acid polypeptide reads, in one-letter code: Cytochrome c biogenesis protein CcsA (320 aa).

Helical transmembrane passes span isoleucine 9 to leucine 29, glycine 44 to glycine 64, leucine 71 to phenylalanine 91, leucine 99 to leucine 119, methionine 144 to isoleucine 164, isoleucine 226 to asparagine 246, tryptophan 261 to leucine 281, and alanine 287 to leucine 307.

This sequence belongs to the CcmF/CycK/Ccl1/NrfE/CcsA family. In terms of assembly, may interact with Ccs1.

The protein resides in the plastid. The protein localises to the chloroplast thylakoid membrane. In terms of biological role, required during biogenesis of c-type cytochromes (cytochrome c6 and cytochrome f) at the step of heme attachment. This Carica papaya (Papaya) protein is Cytochrome c biogenesis protein CcsA.